A 1474-amino-acid polypeptide reads, in one-letter code: Alpha-2-macroglobulin-P (1474 aa).

The N-terminal stretch at 1-32 (MGKRWLPSLALLPLPPPLLLLLLLLLPTNASA) is a signal peptide. Cys-55 and Cys-93 form a disulfide bridge. Residues Asn-62, Asn-77, and Asn-253 are each glycosylated (N-linked (GlcNAc...) asparagine). Intrachain disulfides connect Cys-257/Cys-305 and Cys-275/Cys-293. Residue Asn-402 is glycosylated (N-linked (GlcNAc...) asparagine). 3 disulfide bridges follow: Cys-476–Cys-569, Cys-601–Cys-771, and Cys-650–Cys-697. Positions 623-752 (LVYDLLPVKD…LVIVDSTGVA (130 aa)) are bait region. N-linked (GlcNAc...) asparagine glycans are attached at residues Asn-654 and Asn-774. Intrachain disulfides connect Cys-821–Cys-849, Cys-847–Cys-883, Cys-921–Cys-1321, Cys-1079–Cys-1127, and Cys-1352–Cys-1467. A glycan (N-linked (GlcNAc...) asparagine) is linked at Asn-869. Residues 972-975 (CGEQ) constitute a cross-link (isoglutamyl cysteine thioester (Cys-Gln)). Asn-991 carries N-linked (GlcNAc...) asparagine glycosylation. Asn-1366 is a glycosylation site (N-linked (GlcNAc...) asparagine).

It belongs to the protease inhibitor I39 (alpha-2-macroglobulin) family. Homotetramer; disulfide-linked. In terms of tissue distribution, expressed in uterus, mesometrial lymphoid aggregate and mammary tissue during pregnancy. Expressed in ovary, testis and kidney. Low level expression in heart. Not expressed in liver.

The protein localises to the secreted. Its function is as follows. Is able to inhibit all four classes of proteinases by a unique 'trapping' mechanism. This protein has a peptide stretch, called the 'bait region' which contains specific cleavage sites for different proteinases. When a proteinase cleaves the bait region, a conformational change is induced in the protein which traps the proteinase. The entrapped enzyme remains active against low molecular weight substrates (activity against high molecular weight substrates is greatly reduced). Following cleavage in the bait region a thioester bond is hydrolyzed and mediates the covalent binding of the protein to the proteinase. This chain is Alpha-2-macroglobulin-P, found in Mus musculus (Mouse).